We begin with the raw amino-acid sequence, 95 residues long: Aspartyl/glutamyl-tRNA(Asn/Gln) amidotransferase subunit C (95 aa).

It belongs to the GatC family. As to quaternary structure, heterotrimer of A, B and C subunits.

The catalysed reaction is L-glutamyl-tRNA(Gln) + L-glutamine + ATP + H2O = L-glutaminyl-tRNA(Gln) + L-glutamate + ADP + phosphate + H(+). It catalyses the reaction L-aspartyl-tRNA(Asn) + L-glutamine + ATP + H2O = L-asparaginyl-tRNA(Asn) + L-glutamate + ADP + phosphate + 2 H(+). Its function is as follows. Allows the formation of correctly charged Asn-tRNA(Asn) or Gln-tRNA(Gln) through the transamidation of misacylated Asp-tRNA(Asn) or Glu-tRNA(Gln) in organisms which lack either or both of asparaginyl-tRNA or glutaminyl-tRNA synthetases. The reaction takes place in the presence of glutamine and ATP through an activated phospho-Asp-tRNA(Asn) or phospho-Glu-tRNA(Gln). This is Aspartyl/glutamyl-tRNA(Asn/Gln) amidotransferase subunit C from Nitrobacter hamburgensis (strain DSM 10229 / NCIMB 13809 / X14).